Here is an 858-residue protein sequence, read N- to C-terminus: Chitin synthase 2 (858 aa).

Basic and acidic residues predominate over residues 1–12 (MYPEGPKPEHDQ). The segment at 1–116 (MYPEGPKPEH…GQAPRRQPRR (116 aa)) is disordered. Residues 15 to 24 (LQDTQFSNQP) show a composition bias toward polar residues. Pro residues-rich tracts occupy residues 52–68 (AYPP…PNFP) and 76–89 (PYPP…PVSP). 7 helical membrane passes run 500 to 517 (RWLN…YHWR), 540 to 560 (TYNL…FFIL), 586 to 606 (LHTV…IMAL), 621 to 641 (MVFF…ITVV), 665 to 685 (NIII…FMFL), 799 to 819 (VLAW…TTVI), and 825 to 845 (ASIY…IRFT).

It belongs to the chitin synthase family.

The protein resides in the cell membrane. The enzyme catalyses [(1-&gt;4)-N-acetyl-beta-D-glucosaminyl](n) + UDP-N-acetyl-alpha-D-glucosamine = [(1-&gt;4)-N-acetyl-beta-D-glucosaminyl](n+1) + UDP + H(+). Functionally, polymerizes chitin, a structural polymer of the cell wall and septum, by transferring the sugar moiety of UDP-GlcNAc to the non-reducing end of the growing chitin polymer. The protein is Chitin synthase 2 (CHS2) of Rhizopus oligosporus (Rhizopus microsporus var. oligosporus).